Here is a 118-residue protein sequence, read N- to C-terminus: uncharacterized protein (118 aa).

The segment at 25–85 is disordered; that stretch reads AEQPGSGGIA…SSSSTPSRAR (61 aa). Residues 71 to 83 show a composition bias toward low complexity; sequence RPSASSSSSTPSR.

This is an uncharacterized protein from Azospirillum brasilense.